The primary structure comprises 230 residues: Ribosomal RNA small subunit methyltransferase G (230 aa).

S-adenosyl-L-methionine-binding positions include glycine 93, leucine 98, isoleucine 144–glutamate 145, and arginine 158.

It belongs to the methyltransferase superfamily. RNA methyltransferase RsmG family.

It localises to the cytoplasm. It carries out the reaction guanosine(527) in 16S rRNA + S-adenosyl-L-methionine = N(7)-methylguanosine(527) in 16S rRNA + S-adenosyl-L-homocysteine. Specifically methylates the N7 position of guanine in position 527 of 16S rRNA. The chain is Ribosomal RNA small subunit methyltransferase G from Bordetella parapertussis (strain 12822 / ATCC BAA-587 / NCTC 13253).